An 829-amino-acid chain; its full sequence is Leucine--tRNA ligase (829 aa).

Residues P34–H44 carry the 'HIGH' region motif. A 'KMSKS' region motif is present at residues K591–S595. ATP is bound at residue K594.

The protein belongs to the class-I aminoacyl-tRNA synthetase family.

It localises to the cytoplasm. It catalyses the reaction tRNA(Leu) + L-leucine + ATP = L-leucyl-tRNA(Leu) + AMP + diphosphate. The sequence is that of Leucine--tRNA ligase from Ehrlichia chaffeensis (strain ATCC CRL-10679 / Arkansas).